The following is a 95-amino-acid chain: Large ribosomal subunit protein bL21 (95 aa).

The protein belongs to the bacterial ribosomal protein bL21 family. Part of the 50S ribosomal subunit. Contacts protein L20.

Its function is as follows. This protein binds to 23S rRNA in the presence of protein L20. The polypeptide is Large ribosomal subunit protein bL21 (Chlorobaculum tepidum (strain ATCC 49652 / DSM 12025 / NBRC 103806 / TLS) (Chlorobium tepidum)).